A 143-amino-acid chain; its full sequence is Nucleoside diphosphate kinase (143 aa).

ATP is bound by residues lysine 11, phenylalanine 59, arginine 87, threonine 93, arginine 104, and asparagine 114. The active-site Pros-phosphohistidine intermediate is histidine 117.

This sequence belongs to the NDK family. Homotetramer. Requires Mg(2+) as cofactor.

The protein localises to the cytoplasm. The enzyme catalyses a 2'-deoxyribonucleoside 5'-diphosphate + ATP = a 2'-deoxyribonucleoside 5'-triphosphate + ADP. The catalysed reaction is a ribonucleoside 5'-diphosphate + ATP = a ribonucleoside 5'-triphosphate + ADP. In terms of biological role, major role in the synthesis of nucleoside triphosphates other than ATP. The ATP gamma phosphate is transferred to the NDP beta phosphate via a ping-pong mechanism, using a phosphorylated active-site intermediate. The chain is Nucleoside diphosphate kinase from Edwardsiella ictaluri (strain 93-146).